A 2466-amino-acid polypeptide reads, in one-letter code: Highly reducing polyketide synthase apmlA (2466 aa).

Residues 1–57 form a disordered region; that stretch reads MSDHNHTNGTTNGNGIGSNGVQSHVPNGAHINGTSSGLKPNGISNGTTNGINGHAPS. The span at 41 to 53 shows a compositional bias: low complexity; that stretch reads NGISNGTTNGING. The 430-residue stretch at 62–491 folds into the Ketosynthase family 3 (KS3) domain; the sequence is QTPVAVVGLA…GTNAHVVLEA (430 aa). Active-site for beta-ketoacyl synthase activity residues include Cys235, His372, and His412. The interval 608-921 is malonyl-CoA:ACP transacylase (MAT) domain; sequence IFTGQGAQWS…QYVAAAKRGA (314 aa). Catalysis depends on Ser700, which acts as the For malonyltransferase activity. The tract at residues 988 to 1124 is N-terminal hotdog fold; it reads HDLLGSKILS…GLVRIDEEAF (137 aa). A dehydratase (DH) domain region spans residues 988–1297; that stretch reads HDLLGSKILS…RFDPISSRGD (310 aa). The PKS/mFAS DH domain occupies 988–1298; sequence HDLLGSKILS…FDPISSRGDQ (311 aa). Residue His1020 is the Proton acceptor; for dehydratase activity of the active site. The tract at residues 1137 to 1298 is C-terminal hotdog fold; the sequence is AHPEPGAVGY…FDPISSRGDQ (162 aa). Asp1202 serves as the catalytic Proton donor; for dehydratase activity. Residues 1737–2061 form an enoyl reductase (ER) domain region; it reads GTIDSLHYAE…STKHMGKLVL (325 aa). The interval 2087 to 2264 is ketoreductase (KR) domain; it reads TYLLVGGLKG…STVNLGIIEQ (178 aa). Residues 2382-2462 enclose the Carrier domain; that stretch reads ANLPQVVDAT…FLAEKIITKV (81 aa). An O-(pantetheine 4'-phosphoryl)serine modification is found at Ser2422.

Requires pantetheine 4'-phosphate as cofactor.

It functions in the pathway secondary metabolite biosynthesis. Highly reducing polyketide synthase (HR-PKS); part of the gene cluster that mediates the biosynthesis of phaeospelide A, a fungal polyene macrolide with a 34-membered macrolactone ring and an all-trans conjugated hexaene structure. The HR-PKS ApmlA uses acetyl-CoA and malonyl-CoA as its starter and extender units, respectively, and provides the large carbon framework in phaeospelide via 16 cycles of polyketide chain elongation, which is the largest number identified in fungal iterative PKSs thus far. During round 1, the KR domain reduces beta-ketone to an L-oriented hydroxy group, while during later rounds, it provides hydroxy groups in the D-configuration. The characteristic conjugated hexaene moiety is built during the later rounds (10-15), when the KR and DH domains are at work but ER is off. Phylogenetic analysis of the DH domain suggests that a polyene formation is programmed in the DH domain. Finally, the mature ACP-tethered carbon chain is transferred to the serine residue of the thiohydrolase apmlB, followed by intramolecular macrolactonization, generating phaeospelide A. When one elongation cycle during rounds 7-9 is skipped, phaeospelide B is biosynthesized instead. The polypeptide is Highly reducing polyketide synthase apmlA (Arthrinium phaeospermum (Gymnosporium phaeospermum)).